The following is an 86-amino-acid chain: Small ribosomal subunit protein bS18 (86 aa).

This sequence belongs to the bacterial ribosomal protein bS18 family. Part of the 30S ribosomal subunit. Forms a tight heterodimer with protein bS6.

Functionally, binds as a heterodimer with protein bS6 to the central domain of the 16S rRNA, where it helps stabilize the platform of the 30S subunit. The sequence is that of Small ribosomal subunit protein bS18 from Campylobacter concisus (strain 13826).